The sequence spans 128 residues: Small ribosomal subunit protein eS8 (128 aa).

The protein belongs to the eukaryotic ribosomal protein eS8 family. As to quaternary structure, part of the 30S ribosomal subunit.

The polypeptide is Small ribosomal subunit protein eS8 (Methanococcus aeolicus (strain ATCC BAA-1280 / DSM 17508 / OCM 812 / Nankai-3)).